Here is a 204-residue protein sequence, read N- to C-terminus: Elongation factor Ts (204 aa).

Residues 80–83 (TDFV) form an involved in Mg(2+) ion dislocation from EF-Tu region.

It belongs to the EF-Ts family.

The protein localises to the cytoplasm. Associates with the EF-Tu.GDP complex and induces the exchange of GDP to GTP. It remains bound to the aminoacyl-tRNA.EF-Tu.GTP complex up to the GTP hydrolysis stage on the ribosome. The chain is Elongation factor Ts from Thermoanaerobacter sp. (strain X514).